The sequence spans 101 residues: Apolipoprotein C-II (101 aa).

An N-terminal signal peptide occupies residues Met1 to Gly22. The segment at Ala66 to Met74 is lipid binding. Residues Ser78–Glu101 form a lipoprotein lipase cofactor region.

This sequence belongs to the apolipoprotein C2 family. Proapolipoprotein C-II is synthesized as a sialic acid containing glycoprotein which is subsequently desialylated prior to its proteolytic processing. Post-translationally, proapolipoprotein C-II, the major form found in plasma undergoes proteolytic cleavage of its N-terminal hexapeptide to generate apolipoprotein C-II, which occurs as the minor form in plasma.

It localises to the secreted. Functionally, component of chylomicrons, very low-density lipoproteins (VLDL), low-density lipoproteins (LDL), and high-density lipoproteins (HDL) in plasma. Plays an important role in lipoprotein metabolism as an activator of lipoprotein lipase. Both proapolipoprotein C-II and apolipoprotein C-II can activate lipoprotein lipase. The sequence is that of Apolipoprotein C-II (APOC2) from Saimiri boliviensis boliviensis (Bolivian squirrel monkey).